The primary structure comprises 272 residues: LDMGHMVNNIKQIDEFVNLGSNAIETDVSFDKKANPEYTYHGTPCDCGRDCLRWEYFNDFVKALRTATTPGNSKYDKLFLVVFDLKTSSLYDYQASEAGTKLAKNLLQHYWNNGNNGGRAYIILSIPNLKHYKLITGFQQTLKDEGHAELLDKVGYDFSGNDDIGDVQKTYEKAGVTGHVWQSDGITNCLLRGFTRINAAVANRDSANGIINKVYYWTVDKRQTTRDTLDANVDGIMTNYPDITVEILNEDAYKKKFRIATYEDNPWETFKE.

The active site involves His-5. Mg(2+)-binding residues include Glu-25 and Asp-27. The active-site Nucleophile is the His-41. 2 cysteine pairs are disulfide-bonded: Cys-45/Cys-51 and Cys-47/Cys-189. Asp-84 contributes to the Mg(2+) binding site.

Belongs to the arthropod phospholipase D family. Class II subfamily. Mg(2+) serves as cofactor. Expressed by the venom gland.

It is found in the secreted. The enzyme catalyses an N-(acyl)-sphingosylphosphocholine = an N-(acyl)-sphingosyl-1,3-cyclic phosphate + choline. It catalyses the reaction an N-(acyl)-sphingosylphosphoethanolamine = an N-(acyl)-sphingosyl-1,3-cyclic phosphate + ethanolamine. The catalysed reaction is a 1-acyl-sn-glycero-3-phosphocholine = a 1-acyl-sn-glycero-2,3-cyclic phosphate + choline. It carries out the reaction a 1-acyl-sn-glycero-3-phosphoethanolamine = a 1-acyl-sn-glycero-2,3-cyclic phosphate + ethanolamine. In terms of biological role, dermonecrotic toxins cleave the phosphodiester linkage between the phosphate and headgroup of certain phospholipids (sphingolipid and lysolipid substrates), forming an alcohol (often choline) and a cyclic phosphate. This toxin acts on sphingomyelin (SM). It may also act on ceramide phosphoethanolamine (CPE), lysophosphatidylcholine (LPC) and lysophosphatidylethanolamine (LPE), but not on lysophosphatidylserine (LPS), and lysophosphatidylglycerol (LPG). It acts by transphosphatidylation, releasing exclusively cyclic phosphate products as second products. Induces dermonecrosis, hemolysis, increased vascular permeability, edema, inflammatory response, and platelet aggregation. The chain is Dermonecrotic toxin LvSicTox-alphaIC1biv from Loxosceles variegata (Recluse spider).